Here is a 301-residue protein sequence, read N- to C-terminus: Inosose dehydratase (301 aa).

This sequence belongs to the IolE/MocC family. The cofactor is glutathione. Requires Co(2+) as cofactor. Mn(2+) serves as cofactor.

The catalysed reaction is scyllo-inosose = 3D-3,5/4-trihydroxycyclohexane-1,2-dione + H2O. Its pathway is polyol metabolism; myo-inositol degradation into acetyl-CoA; acetyl-CoA from myo-inositol: step 2/7. Its function is as follows. Catalyzes the dehydration of inosose (2-keto-myo-inositol, 2KMI or 2,4,6/3,5-pentahydroxycyclohexanone) to 3D-(3,5/4)-trihydroxycyclohexane-1,2-dione (D-2,3-diketo-4-deoxy-epi-inositol). This is Inosose dehydratase from Lacticaseibacillus casei (strain BL23) (Lactobacillus casei).